Reading from the N-terminus, the 295-residue chain is Bifunctional protein FolD (295 aa).

NADP(+) contacts are provided by residues 166–168 (GRS), S195, and I236.

Belongs to the tetrahydrofolate dehydrogenase/cyclohydrolase family. As to quaternary structure, homodimer.

It carries out the reaction (6R)-5,10-methylene-5,6,7,8-tetrahydrofolate + NADP(+) = (6R)-5,10-methenyltetrahydrofolate + NADPH. It catalyses the reaction (6R)-5,10-methenyltetrahydrofolate + H2O = (6R)-10-formyltetrahydrofolate + H(+). The protein operates within one-carbon metabolism; tetrahydrofolate interconversion. Catalyzes the oxidation of 5,10-methylenetetrahydrofolate to 5,10-methenyltetrahydrofolate and then the hydrolysis of 5,10-methenyltetrahydrofolate to 10-formyltetrahydrofolate. This chain is Bifunctional protein FolD, found in Chlorobium phaeovibrioides (strain DSM 265 / 1930) (Prosthecochloris vibrioformis (strain DSM 265)).